The sequence spans 640 residues: Threonine--tRNA ligase (640 aa).

Positions 1–60 constitute a TGS domain; it reads MKITFPDGAVKEFEPGVSTADIAASISPGLKKKALAGKLNGELLDLVTPIHEDGAIEIVT. Positions 241–538 are catalytic; sequence DHRKLGKELD…LIEEYKGAFP (298 aa). Zn(2+)-binding residues include Cys334, His385, and His515.

This sequence belongs to the class-II aminoacyl-tRNA synthetase family. Homodimer. It depends on Zn(2+) as a cofactor.

The protein localises to the cytoplasm. The enzyme catalyses tRNA(Thr) + L-threonine + ATP = L-threonyl-tRNA(Thr) + AMP + diphosphate + H(+). Catalyzes the attachment of threonine to tRNA(Thr) in a two-step reaction: L-threonine is first activated by ATP to form Thr-AMP and then transferred to the acceptor end of tRNA(Thr). Also edits incorrectly charged L-seryl-tRNA(Thr). This Listeria monocytogenes serotype 4b (strain CLIP80459) protein is Threonine--tRNA ligase.